We begin with the raw amino-acid sequence, 228 residues long: Probable septum site-determining protein MinC (228 aa).

Belongs to the MinC family. In terms of assembly, interacts with MinD and FtsZ.

Cell division inhibitor that blocks the formation of polar Z ring septums. Rapidly oscillates between the poles of the cell to destabilize FtsZ filaments that have formed before they mature into polar Z rings. Prevents FtsZ polymerization. This Pectobacterium atrosepticum (strain SCRI 1043 / ATCC BAA-672) (Erwinia carotovora subsp. atroseptica) protein is Probable septum site-determining protein MinC.